The chain runs to 505 residues: ATP synthase subunit alpha, chloroplastic (505 aa).

Residue 172-179 (GDRQTGKT) participates in ATP binding.

This sequence belongs to the ATPase alpha/beta chains family. F-type ATPases have 2 components, CF(1) - the catalytic core - and CF(0) - the membrane proton channel. CF(1) has five subunits: alpha(3), beta(3), gamma(1), delta(1), epsilon(1). CF(0) has four main subunits: a, b, b' and c.

Its subcellular location is the plastid. The protein localises to the chloroplast thylakoid membrane. The catalysed reaction is ATP + H2O + 4 H(+)(in) = ADP + phosphate + 5 H(+)(out). Produces ATP from ADP in the presence of a proton gradient across the membrane. The alpha chain is a regulatory subunit. The sequence is that of ATP synthase subunit alpha, chloroplastic from Antithamnion sp. (Red alga).